The sequence spans 257 residues: Transcription factor LBX2 (257 aa).

The segment at 1–43 is disordered; it reads MTSSSKDMKAGSVLQSSGEERRRGPLDQLPPPANSNKPLTPFS. Residues 1 to 46 form a required for convergent extension movement and hypaxial myogenesis during gastrulation. Required for the formation of thick and thin myofilaments. Required for myod1 expression in the pectoral fin bud. Required for continuous expression of cxcl12a in the posterior lateral mesoderm at the tail bud stage and in adaxial cells at the 10-somite stage region; the sequence is MTSSSKDMKAGSVLQSSGEERRRGPLDQLPPPANSNKPLTPFSIED. A DNA-binding region (homeobox) is located at residues 126 to 185; it reads RRKSRTAFTNHQIYELEKRFLYQKYLSPADRDQIAQQLGLTNAQVITWFQNRRAKLKRDL. The interval 206-257 is disordered; that stretch reads LVSMEDMEDAHGGSGPISPSLSPRAFPQSPSSSRGQTTDEFSEEDEEIEVDD. A compositionally biased stretch (polar residues) spans 233-243; sequence QSPSSSRGQTT. Residues 245-257 are compositionally biased toward acidic residues; the sequence is EFSEEDEEIEVDD.

In terms of assembly, interacts (via N-terminus) with tle3a/gro2 (via C-terminus).

It localises to the nucleus. Its function is as follows. Transcription factor required in several developmental processes. Involved in axis formation during embryonic development by inhibiting tle3a/gro2 from binding to tcf7l1a, thereby facilitating ctnnb1-mediated transcription of canonical Wnt/CTNNB1 signaling target genes. Regulates convergent extension movements and hypaxial myogenesis during gastrulation by activating non-canonical Wnt signaling via wnt5b. Required for the formation of myofibrils and fusion of fast muscle precursor cells, potentially via transcriptional regulation of genes specific to thick and thin myofilaments. Regulates the migration of the posterior lateral line primordium during embryonic development, possibly via regulation of cxcl12a/sdf1a expression in the posterior lateral mesoderm, thereby modulating the deposition of neuromasts at correct intervals. The polypeptide is Transcription factor LBX2 (Danio rerio (Zebrafish)).